The chain runs to 588 residues: MGDETVDGIEAKYISGLSTIMVATIQEAKDRISQIEYIFCSQLFPNFQSKSKAFEKVYSEARLAACDTWKDREKSLLDQIEELKVENQQIKSDKEKLAEELGKTASMPLRLTSLQGYIDHLKKKMKSRSKMVGDARDLYYRLVELLQVKGLDELSEDGINMIVSEVKSLKMKTEFLQEELSKKTLVTENLLKKLEYLSTEAADGERKLSSVEEEKQRLKTRLQVFEENVGRLEEILRQKTDEVEEGKTALEVLQGKLKLTEREMLNCKQKIADHEKEKTVVMGKAKDDMQGRHGSYLADLEALRCQSEEKSFELAMEIKKNKELSRTCKKWKSQHTFLCKRFNFTPDSVLHQSSLEDENKEIGQHEKSAISSYLERKHSETAEGADKVRIGTGSSGNNYEKESIIKTVQTPITSISPIVRSPGAAKPPQLSGLKRPASIWRDTRSRQSPGGHDPHDDFLDTPIENVKRVAGEEKHVHDVAKKDDSDDETQDMNPKPSPSRQRIQIAETSKKSFKHVESVRKKAERENLKGIECKQCKKFYDAVHPENEGNGNKSLRCEHHEGVSRHRYRYAPPMTPEGFWNIGFESEM.

Coiled-coil stretches lie at residues 64–104 and 164–281; these read AACD…LGKT and SEVK…KTVV. Basic and acidic residues-rich tracts occupy residues 377–389, 465–484, and 508–525; these read KHSE…DKVR, NVKR…KKDD, and TSKK…KAER. Disordered regions lie at residues 377-398 and 417-525; these read KHSE…SGNN and PIVR…KAER.

As to expression, basal levels in mitotically dividing cells (meristems), and high levels in endoreduplicating cells (stipules, trichomes) (at protein level).

It localises to the nucleus. In terms of biological role, seems to mediate cell cycle arrest before mitosis in response to DNA damage. Is probably also involved in the transition from mitosis to endoreduplication. The sequence is that of Protein gamma response 1 (GR1) from Arabidopsis thaliana (Mouse-ear cress).